The sequence spans 484 residues: Probable cytochrome P450 508A1 (484 aa).

The chain crosses the membrane as a helical span at residues 1 to 21 (MALFEIIISLFVVYIIHNAIS). Cysteine 428 lines the heme pocket.

It belongs to the cytochrome P450 family. The cofactor is heme.

Its subcellular location is the membrane. The chain is Probable cytochrome P450 508A1 (cyp508A1-1) from Dictyostelium discoideum (Social amoeba).